The primary structure comprises 333 residues: tRNA dimethylallyltransferase (333 aa).

An ATP-binding site is contributed by 16 to 23 (GPTASGKT). 18–23 (TASGKT) contributes to the substrate binding site. Interaction with substrate tRNA regions lie at residues 41–44 (DSAL), 165–169 (QRISR), and 253–258 (RCVGYR).

This sequence belongs to the IPP transferase family. As to quaternary structure, monomer. Mg(2+) is required as a cofactor.

The catalysed reaction is adenosine(37) in tRNA + dimethylallyl diphosphate = N(6)-dimethylallyladenosine(37) in tRNA + diphosphate. Catalyzes the transfer of a dimethylallyl group onto the adenine at position 37 in tRNAs that read codons beginning with uridine, leading to the formation of N6-(dimethylallyl)adenosine (i(6)A). This is tRNA dimethylallyltransferase from Polaromonas sp. (strain JS666 / ATCC BAA-500).